Reading from the N-terminus, the 379-residue chain is Homoserine O-succinyltransferase (379 aa).

Residues 51 to 360 (NAVLICHALS…DAPQGHDAFL (310 aa)) form the AB hydrolase-1 domain. Residue serine 157 is the Nucleophile of the active site. Substrate is bound at residue arginine 227. Catalysis depends on residues aspartate 323 and histidine 356. Aspartate 357 is a binding site for substrate.

This sequence belongs to the AB hydrolase superfamily. MetX family. Homodimer.

The protein resides in the cytoplasm. The catalysed reaction is L-homoserine + succinyl-CoA = O-succinyl-L-homoserine + CoA. It participates in amino-acid biosynthesis; L-methionine biosynthesis via de novo pathway; O-succinyl-L-homoserine from L-homoserine: step 1/1. Requires MetW for activity. In terms of biological role, transfers a succinyl group from succinyl-CoA to L-homoserine, forming succinyl-L-homoserine. In Pseudomonas syringae pv. syringae (strain B728a), this protein is Homoserine O-succinyltransferase.